A 421-amino-acid chain; its full sequence is tRNA (guanine-N(7)-)-methyltransferase non-catalytic subunit TRM82 (421 aa).

WD repeat units follow at residues 72 to 112 (AVYS…EDPE), 170 to 212 (GHVS…IVDK), and 216 to 258 (GHKE…SQYS).

This sequence belongs to the WD repeat TRM82 family. Forms a heterodimer with the catalytic subunit TRM8.

It localises to the nucleus. The protein operates within tRNA modification; N(7)-methylguanine-tRNA biosynthesis. Functionally, required for the formation of N(7)-methylguanine at position 46 (m7G46) in tRNA. In the complex, it is required to stabilize and induce conformational changes of the catalytic subunit. The protein is tRNA (guanine-N(7)-)-methyltransferase non-catalytic subunit TRM82 of Candida glabrata (strain ATCC 2001 / BCRC 20586 / JCM 3761 / NBRC 0622 / NRRL Y-65 / CBS 138) (Yeast).